We begin with the raw amino-acid sequence, 203 residues long: MPNKPGLWSRLVDYLGFGPEEDEFEDGELEQVQPAYQEEPPRRSAPERRGQVVPISAVPSKQGTVKVVVVEPRSFEEVQTIVDQMKARRPVILNLESLDKDLAQKILNFLNGAIYALNGETQRVSAGIFFYAPPGIDVSTMGRGLTGTAIGGGAVDLPPGVLEKLMGTASGSQEGDLLARTARRSEEGDRTGADRSKFDWRNQ.

2 disordered regions span residues 26–51 (DGEL…RRGQ) and 167–203 (GTAS…WRNQ). Composition is skewed to basic and acidic residues over residues 39–50 (EPPRRSAPERRG) and 183–203 (RRSE…WRNQ).

This sequence belongs to the SepF family. Homodimer. Interacts with FtsZ.

It localises to the cytoplasm. Functionally, cell division protein that is part of the divisome complex and is recruited early to the Z-ring. Probably stimulates Z-ring formation, perhaps through the cross-linking of FtsZ protofilaments. Its function overlaps with FtsA. The sequence is that of Cell division protein SepF from Symbiobacterium thermophilum (strain DSM 24528 / JCM 14929 / IAM 14863 / T).